Here is a 284-residue protein sequence, read N- to C-terminus: Tryptophan 2,3-dioxygenase (284 aa).

Residues 51 to 55 (FIIQH), Y113, and R117 contribute to the substrate site. Residue H240 participates in heme binding. T254 contacts substrate.

It belongs to the tryptophan 2,3-dioxygenase family. As to quaternary structure, homotetramer. Heme is required as a cofactor.

It carries out the reaction L-tryptophan + O2 = N-formyl-L-kynurenine. It participates in amino-acid degradation; L-tryptophan degradation via kynurenine pathway; L-kynurenine from L-tryptophan: step 1/2. Its function is as follows. Heme-dependent dioxygenase that catalyzes the oxidative cleavage of the L-tryptophan (L-Trp) pyrrole ring and converts L-tryptophan to N-formyl-L-kynurenine. Catalyzes the oxidative cleavage of the indole moiety. The polypeptide is Tryptophan 2,3-dioxygenase (Rhodococcus jostii (strain RHA1)).